We begin with the raw amino-acid sequence, 504 residues long: Ribose import ATP-binding protein RbsA (504 aa).

ABC transporter domains follow at residues 6–242 (LELN…VGRR) and 250–495 (IDVQ…VGKT). Residue 38–45 (GENGAGKS) coordinates ATP.

Belongs to the ABC transporter superfamily. Ribose importer (TC 3.A.1.2.1) family. The complex is composed of an ATP-binding protein (RbsA), two transmembrane proteins (RbsC) and a solute-binding protein (RbsB).

It is found in the cell inner membrane. The catalysed reaction is D-ribose(out) + ATP + H2O = D-ribose(in) + ADP + phosphate + H(+). In terms of biological role, part of the ABC transporter complex RbsABC involved in ribose import. Responsible for energy coupling to the transport system. This Aliivibrio fischeri (strain ATCC 700601 / ES114) (Vibrio fischeri) protein is Ribose import ATP-binding protein RbsA.